The sequence spans 557 residues: Acetylcholine receptor subunit alpha-L1 (557 aa).

Residues 1–23 (MAAALPPMLLLLLLLLLHHPAAA) form the signal peptide. Over 24 to 244 (NPDAKRLYDD…NITLRRKTLF (221 aa)) the chain is Extracellular. N-linked (GlcNAc...) asparagine glycosylation is present at Asn-47. 2 cysteine pairs are disulfide-bonded: Cys-151–Cys-165 and Cys-224–Cys-225. A glycan (N-linked (GlcNAc...) asparagine) is linked at Asn-235. The next 3 helical transmembrane spans lie at 245-266 (YTVN…VFYL), 274-294 (IALC…ISEI), and 308-329 (YLLF…VLNV). At 330-500 (HYRKPSTHKM…EFDAEDQDWG (171 aa)) the chain is on the cytoplasmic side. The chain crosses the membrane as a helical span at residues 501-523 (FVAMVLDRLFLWIFTIASIVGTF).

The protein belongs to the ligand-gated ion channel (TC 1.A.9) family. Acetylcholine receptor (TC 1.A.9.1) subfamily.

It localises to the postsynaptic cell membrane. The protein resides in the cell membrane. After binding acetylcholine, the AChR responds by an extensive change in conformation that affects all subunits and leads to opening of an ion-conducting channel across the plasma membrane. The polypeptide is Acetylcholine receptor subunit alpha-L1 (Schistocerca gregaria (Desert locust)).